The following is a 272-amino-acid chain: 3-methyl-2-oxobutanoate hydroxymethyltransferase (272 aa).

2 residues coordinate Mg(2+): Asp42 and Asp86. Residues 42-43 (DS), Asp86, and Lys116 each bind 3-methyl-2-oxobutanoate. Glu118 provides a ligand contact to Mg(2+). Glu185 serves as the catalytic Proton acceptor.

This sequence belongs to the PanB family. Homodecamer; pentamer of dimers. It depends on Mg(2+) as a cofactor.

The protein localises to the cytoplasm. The enzyme catalyses 3-methyl-2-oxobutanoate + (6R)-5,10-methylene-5,6,7,8-tetrahydrofolate + H2O = 2-dehydropantoate + (6S)-5,6,7,8-tetrahydrofolate. The protein operates within cofactor biosynthesis; (R)-pantothenate biosynthesis; (R)-pantoate from 3-methyl-2-oxobutanoate: step 1/2. Catalyzes the reversible reaction in which hydroxymethyl group from 5,10-methylenetetrahydrofolate is transferred onto alpha-ketoisovalerate to form ketopantoate. The chain is 3-methyl-2-oxobutanoate hydroxymethyltransferase from Prochlorococcus marinus (strain NATL1A).